Consider the following 187-residue polypeptide: Large ribosomal subunit protein uL13 (187 aa).

It belongs to the universal ribosomal protein uL13 family. As to quaternary structure, part of the 50S ribosomal subunit.

Its function is as follows. This protein is one of the early assembly proteins of the 50S ribosomal subunit, although it is not seen to bind rRNA by itself. It is important during the early stages of 50S assembly. The polypeptide is Large ribosomal subunit protein uL13 (Pyrobaculum aerophilum (strain ATCC 51768 / DSM 7523 / JCM 9630 / CIP 104966 / NBRC 100827 / IM2)).